We begin with the raw amino-acid sequence, 373 residues long: Putative gustatory receptor 10b (373 aa).

Topologically, residues 1–8 (MRVGKLCR) are cytoplasmic. A helical membrane pass occupies residues 9–29 (LALRFWMGLILVLGFSSHYYN). The Extracellular segment spans residues 30–82 (PTRRRLVYSRILQTYDWLLMVINLGAFYLYYRYAMTYFLEGMFRRQGFVNQVS). The chain crosses the membrane as a helical span at residues 83-103 (TCNVFQQLLMAVTGTWLHFLF). The Cytoplasmic portion of the chain corresponds to 104-132 (ERHVCQTYNELSRILKHDLKLKEHSRFYC). Residues 133–153 (LAFLAKVYNFFHNFNFALSAI) traverse the membrane as a helical segment. At 154 to 170 (MHWGLRPFNVWDLLANL) the chain is on the extracellular side. A helical membrane pass occupies residues 171-191 (YFVYNSLARDAILVAYVLLLL). The Cytoplasmic segment spans residues 192-230 (NLSEALRLNGQQEHDTYSDLMKQLRRRERLLRIGRRVHR). The helical transmembrane segment at 231-251 (MFAWLVAIALIYLVFFNTATI) threads the bilayer. Residues 252-273 (YLGYTMFIQKHDALGLRGRGLK) are Extracellular-facing. A helical membrane pass occupies residues 274–294 (MLLTVVSFLVILWDVVLLQVI). The Cytoplasmic portion of the chain corresponds to 295-350 (CEKLLAEENKICDCPEDVASSRTTYRQWEMSALRRAITRSSPENNVLGMFRMDMRC). A helical membrane pass occupies residues 351–371 (AFALISCSLSYGIIIIQIGYI). Over 372–373 (PG) the chain is Extracellular.

It belongs to the insect chemoreceptor superfamily. Gustatory receptor (GR) family. Gr10a subfamily.

The protein resides in the cell membrane. In terms of biological role, probable gustatory receptor which mediates acceptance or avoidance behavior, depending on its substrates. The chain is Putative gustatory receptor 10b (Gr10b) from Drosophila melanogaster (Fruit fly).